Here is a 397-residue protein sequence, read N- to C-terminus: Tryptophan synthase beta chain (397 aa).

K87 carries the N6-(pyridoxal phosphate)lysine modification.

It belongs to the TrpB family. Tetramer of two alpha and two beta chains. Pyridoxal 5'-phosphate is required as a cofactor.

It catalyses the reaction (1S,2R)-1-C-(indol-3-yl)glycerol 3-phosphate + L-serine = D-glyceraldehyde 3-phosphate + L-tryptophan + H2O. The protein operates within amino-acid biosynthesis; L-tryptophan biosynthesis; L-tryptophan from chorismate: step 5/5. In terms of biological role, the beta subunit is responsible for the synthesis of L-tryptophan from indole and L-serine. The polypeptide is Tryptophan synthase beta chain (Escherichia coli O139:H28 (strain E24377A / ETEC)).